The following is a 160-amino-acid chain: 2-C-methyl-D-erythritol 2,4-cyclodiphosphate synthase (160 aa).

A divalent metal cation is bound by residues aspartate 9 and histidine 11. Residues 9 to 11 (DVH) and 35 to 36 (HS) each bind 4-CDP-2-C-methyl-D-erythritol 2-phosphate. Histidine 43 contacts a divalent metal cation. 4-CDP-2-C-methyl-D-erythritol 2-phosphate is bound by residues 57–59 (DIG), 62–66 (FPDND), and phenylalanine 140.

The protein belongs to the IspF family. As to quaternary structure, homotrimer. The cofactor is a divalent metal cation.

The catalysed reaction is 4-CDP-2-C-methyl-D-erythritol 2-phosphate = 2-C-methyl-D-erythritol 2,4-cyclic diphosphate + CMP. It functions in the pathway isoprenoid biosynthesis; isopentenyl diphosphate biosynthesis via DXP pathway; isopentenyl diphosphate from 1-deoxy-D-xylulose 5-phosphate: step 4/6. Involved in the biosynthesis of isopentenyl diphosphate (IPP) and dimethylallyl diphosphate (DMAPP), two major building blocks of isoprenoid compounds. Catalyzes the conversion of 4-diphosphocytidyl-2-C-methyl-D-erythritol 2-phosphate (CDP-ME2P) to 2-C-methyl-D-erythritol 2,4-cyclodiphosphate (ME-CPP) with a corresponding release of cytidine 5-monophosphate (CMP). In Fusobacterium nucleatum subsp. nucleatum (strain ATCC 25586 / DSM 15643 / BCRC 10681 / CIP 101130 / JCM 8532 / KCTC 2640 / LMG 13131 / VPI 4355), this protein is 2-C-methyl-D-erythritol 2,4-cyclodiphosphate synthase.